A 268-amino-acid chain; its full sequence is LOB domain-containing protein 13 (268 aa).

In terms of domain architecture, LOB spans 51–152 (TPCAACKLLR…SELTTVRTEI (102 aa)). The interval 191-268 (LLPPPPPPPP…SSDNNVHYFD (78 aa)) is disordered. 2 stretches are compositionally biased toward pro residues: residues 192–205 (LPPPPPPPPTPRPP) and 212–222 (PAPPPTPPVSL). Positions 223–243 (PSPSMVVSSSSSSNSSATNSM) are enriched in low complexity. Residues 250–268 (STAGYSNSLSSDNNVHYFD) are compositionally biased toward polar residues.

It belongs to the LOB domain-containing protein family. Expressed in shoots and roots and at low levels in flowers, but not in leaves or inflorescence stems.

This is LOB domain-containing protein 13 (LBD13) from Arabidopsis thaliana (Mouse-ear cress).